The chain runs to 448 residues: Serine/threonine-protein phosphatase 2A regulatory subunit B'' subunit gamma (448 aa).

2 EF-hand domains span residues 268–303 (PSALRVYGQYLNLDKDHNGMLSKEELSRYGTGTLTC) and 336–371 (KEPAALQYIFKLLDIENKGSLNVFSLNFFFRAIQEQ). Ca(2+) is bound by residues Asp281, Asp283, Asn285, Met287, and Glu292.

The protein resides in the nucleus. The protein localises to the cytoplasm. Functionally, possible role in the regulation of cell death. The polypeptide is Serine/threonine-protein phosphatase 2A regulatory subunit B'' subunit gamma (ppp2r3c) (Xenopus tropicalis (Western clawed frog)).